A 247-amino-acid chain; its full sequence is EGF-like domain-containing protein C02B10.3 (247 aa).

Residues 1–17 form the signal peptide; that stretch reads MTGALCIVLFGVTMVTA. Topologically, residues 18 to 220 are extracellular; that stretch reads ERPKIKDTHG…LCDKRCQKGH (203 aa). 2 consecutive EGF-like domains span residues 114–150 and 180–213; these read FGTSCTPHMCQHNGTIAVGKKEIECICPPPWDGRFCE and SGASCDVIKSCLNNGQLIDGKCKCPDGYYGDLCD. Disulfide bonds link Cys-123–Cys-138, Cys-140–Cys-149, Cys-190–Cys-201, and Cys-203–Cys-212. The N-linked (GlcNAc...) asparagine glycan is linked to Asn-126. Residues 221 to 240 form a helical membrane-spanning segment; it reads VTCSTCSSFIPAALFAIILL. Topologically, residues 241 to 247 are cytoplasmic; it reads CVNKFNY.

It localises to the membrane. The protein is EGF-like domain-containing protein C02B10.3 of Caenorhabditis elegans.